We begin with the raw amino-acid sequence, 91 residues long: MTDSQKEAPKIEFPCDYPLKVIGVAGPDFQEVVATIVRAHAPEFDASSIDALDSRNGKYLSLRFSIQAQSEEHIRRLFLDLKAHSAVQMVL.

Belongs to the UPF0250 family.

In Hahella chejuensis (strain KCTC 2396), this protein is UPF0250 protein HCH_05838.